The following is a 167-amino-acid chain: Chorion class CB protein PC404 (167 aa).

Residues 1-55 form a left arm region; that stretch reads IGREAIVGAGLQGPFGGPWPYDALSPFDMPYGPALPAMSCGAGSFGPSSGFAPAA. The central domain stretch occupies residues 56-126; sequence AYGGGLAVTS…GDGAVGIVAE (71 aa). Residues 127 to 167 are right arm; the sequence is TPFASTSVNPAYGYGGAIGGGVPYNSYGPIGYGGCGYNALY.

The protein belongs to the chorion protein family.

Its function is as follows. This protein is one of many from the eggshell of the silk moth. This is Chorion class CB protein PC404 from Antheraea polyphemus (Polyphemus moth).